The following is a 240-amino-acid chain: 3-deoxy-D-manno-octulosonic acid kinase (240 aa).

Asp-170 is a catalytic residue.

The protein belongs to the protein kinase superfamily. KdkA/RfaP family.

Its subcellular location is the cell inner membrane. The catalysed reaction is an alpha-Kdo-(2-&gt;6)-lipid IVA + ATP = a 4-O-phospho-alpha-Kdo-(2-&gt;6)-lipid IVA + ADP + H(+). Its pathway is bacterial outer membrane biogenesis; LPS core biosynthesis. Its function is as follows. Catalyzes the ATP-dependent phosphorylation of the 3-deoxy-D-manno-octulosonic acid (Kdo) residue in Kdo-lipid IV(A) at the 4-OH position. This chain is 3-deoxy-D-manno-octulosonic acid kinase, found in Mannheimia succiniciproducens (strain KCTC 0769BP / MBEL55E).